A 330-amino-acid chain; its full sequence is MSSKRIIVTAGEPAGIGPDLVLALSAQDWPHQLVVCADKALLAQRATQLGIQVKLLDYQRDNPVQAQQAGTLLVEHIPLAEPVVAGQLNPANGHYVLKTLERAAKGCMNGEFDAIVTGPVHKGVINRAGVAFSGHTEFFAEQSKTPLVVMMLATEGLRTALVTTHLPLAEVPQAITCERLEQIVHILHKDLVEKFAIAEPKIYVCGLNPHAGEDGVLGMDEIETITPTLQRLREQYGMQLVGPLPADTIFSEKYLQQADAVLGMYHDQVLPVLKYKGFGRSVNITLGLPFIRTSVDHGTALDLAGTGQADAGSFWTALAYAIELVDKKAQ.

His-135 and Thr-136 together coordinate substrate. A divalent metal cation contacts are provided by His-165, His-210, and His-266. Substrate is bound by residues Lys-274, Asn-283, and Arg-292.

Belongs to the PdxA family. As to quaternary structure, homodimer. Requires Zn(2+) as cofactor. It depends on Mg(2+) as a cofactor. The cofactor is Co(2+).

Its subcellular location is the cytoplasm. The enzyme catalyses 4-(phosphooxy)-L-threonine + NAD(+) = 3-amino-2-oxopropyl phosphate + CO2 + NADH. The protein operates within cofactor biosynthesis; pyridoxine 5'-phosphate biosynthesis; pyridoxine 5'-phosphate from D-erythrose 4-phosphate: step 4/5. Catalyzes the NAD(P)-dependent oxidation of 4-(phosphooxy)-L-threonine (HTP) into 2-amino-3-oxo-4-(phosphooxy)butyric acid which spontaneously decarboxylates to form 3-amino-2-oxopropyl phosphate (AHAP). The chain is 4-hydroxythreonine-4-phosphate dehydrogenase from Vibrio cholerae serotype O1 (strain ATCC 39315 / El Tor Inaba N16961).